The chain runs to 675 residues: Heat shock 70 kDa protein 12A (675 aa).

A compositionally biased stretch (basic and acidic residues) spans 1–13 (MADKEAGGSDGPR). The segment at 1–45 (MADKEAGGSDGPRETAPTSAYSSPARSLGDTGITPLSPSHIVNDT) is disordered. A2 bears the N-acetylalanine mark. Polar residues-rich tracts occupy residues 16 to 25 (APTSAYSSPA) and 34 to 45 (TPLSPSHIVNDT).

This sequence belongs to the heat shock protein 70 family. As to quaternary structure, interacts with SORL1 (via cytosolic C-terminus); this interaction affects SORL1 internalization and subcellular localization. As to expression, widely expressed with highest levels in brain, kidney and muscle.

It is found in the cytoplasm. The protein localises to the nucleus. In terms of biological role, adapter protein for SORL1, but not SORT1. Delays SORL1 internalization and affects SORL1 subcellular localization. The protein is Heat shock 70 kDa protein 12A (HSPA12A) of Homo sapiens (Human).